The sequence spans 262 residues: Ribosomal RNA small subunit methyltransferase A (262 aa).

6 residues coordinate S-adenosyl-L-methionine: Asn-14, Leu-16, Gly-41, Glu-62, Asp-87, and Asn-109.

It belongs to the class I-like SAM-binding methyltransferase superfamily. rRNA adenine N(6)-methyltransferase family. RsmA subfamily.

It localises to the cytoplasm. The catalysed reaction is adenosine(1518)/adenosine(1519) in 16S rRNA + 4 S-adenosyl-L-methionine = N(6)-dimethyladenosine(1518)/N(6)-dimethyladenosine(1519) in 16S rRNA + 4 S-adenosyl-L-homocysteine + 4 H(+). Its function is as follows. Specifically dimethylates two adjacent adenosines (A1518 and A1519) in the loop of a conserved hairpin near the 3'-end of 16S rRNA in the 30S particle. May play a critical role in biogenesis of 30S subunits. The protein is Ribosomal RNA small subunit methyltransferase A of Francisella tularensis subsp. novicida (strain U112).